Reading from the N-terminus, the 72-residue chain is Conotoxin im23a (72 aa).

The N-terminal stretch at 1–22 (MIMRMTLTLFVLVVMTAASASG) is a signal peptide. The propeptide occupies 23–28 (DALTEA). Cystine bridges form between C34-C41, C45-C55, and C56-C71.

This sequence belongs to the conotoxin K superfamily. As to expression, expressed by the venom duct.

The protein localises to the secreted. Functionally, neurotoxin that induces excitatory symptoms in mice following intracranial administration. No symptoms are observed after intraperitoneal and intravenous (tail vein) injections. This is Conotoxin im23a from Conus imperialis (Imperial cone).